The primary structure comprises 246 residues: Granzyme H (246 aa).

Residues 1–18 form the signal peptide; sequence MQPFLLLLAFLLTPGAGT. Residues 19–20 constitute a propeptide, activation peptide; that stretch reads EE. The region spanning 21 to 244 is the Peptidase S1 domain; it reads IIGGHEAKPH…FLPWIKRTMK (224 aa). A mediates the preference for acidic residues at the P3' and P4' sites region spans residues 46 to 48; the sequence is RKR. Residues cysteine 49 and cysteine 65 are joined by a disulfide bond. Histidine 64 (charge relay system) is an active-site residue. 2 N-linked (GlcNAc...) asparagine glycosylation sites follow: asparagine 71 and asparagine 104. The active-site Charge relay system is the aspartate 108. 2 disulfides stabilise this stretch: cysteine 142–cysteine 208 and cysteine 172–cysteine 187. An N-linked (GlcNAc...) asparagine glycan is attached at asparagine 179. Serine 202 functions as the Charge relay system in the catalytic mechanism.

Belongs to the peptidase S1 family. Granzyme subfamily. In terms of tissue distribution, constitutively expressed in NK cells.

Its subcellular location is the cytolytic granule. Its activity is regulated as follows. Inhibited by SERPINB1. Cytotoxic chymotrypsin-like serine protease with preference for bulky and aromatic residues at the P1 position and acidic residues at the P3' and P4' sites. Probably necessary for target cell lysis in cell-mediated immune responses. Participates in the antiviral response via direct cleavage of several proteins essential for viral replication. The polypeptide is Granzyme H (GZMH) (Homo sapiens (Human)).